Consider the following 766-residue polypeptide: Protein zer-1 homolog (766 aa).

N-acetylalanine is present on Ala2. LRR repeat units follow at residues 226 to 245 (SLVLYNMDLSDDHIRVIVQL), 246 to 268 (HKLRHLDISRDRLSSYYKFKLTR), and 278 to 302 (LGNLMSLDISGHMILENCSISKMEE). ARM repeat units lie at residues 427 to 467 (RSEQ…NFSI), 511 to 556 (DNDH…NITD), 558 to 600 (TPDN…NVAE), 602 to 643 (KELR…HIMF), and 714 to 756 (PDKY…HCSN).

The protein belongs to the zyg-11 family. As to quaternary structure, interacts with the ELOC-ELOB/Elongin BC complex. Part of an E3 ubiquitin ligase complex including ZER1, CUL2 and Elongin BC. In terms of tissue distribution, expressed in testis, spermatocytes and spermatids (at protein level). Expressed in spermatocytes, spermatids, prostate, skeletal muscle, ovary, small intestine, heart, brain and pancreas.

Serves as substrate adapter subunit in the E3 ubiquitin ligase complex ZYG11B-CUL2-Elongin BC. Acts to target substrates bearing N-terminal degrons for proteasomal degradation with the first four residues of substrates being the key recognition elements. Involved in the clearance of proteolytic fragments generated by caspase cleavage during apoptosis since N-terminal glycine degrons are strongly enriched at caspase cleavage sites. Also important in the quality control of protein N-myristoylation in which N-terminal glycine degrons are conditionally exposed after a failure of N-myristoylation. This is Protein zer-1 homolog from Homo sapiens (Human).